A 308-amino-acid polypeptide reads, in one-letter code: Cilia- and flagella-associated protein 73 (308 aa).

Coiled-coil stretches lie at residues 34–143 (RLLE…LEPC) and 175–233 (AALR…WESK).

The protein belongs to the CFAP73 family.

It is found in the cytoplasm. Its subcellular location is the cytoskeleton. The protein localises to the cilium axoneme. Functionally, may play a role in ciliary/flagellar motility by regulating the assembly and the activity of axonemal inner dynein arm. The chain is Cilia- and flagella-associated protein 73 from Homo sapiens (Human).